A 312-amino-acid polypeptide reads, in one-letter code: Olfactory receptor 10K2 (312 aa).

At 1–25 the chain is on the extracellular side; sequence MERVNETVVREVIFLGFSSLARLQQ. Asn5 is a glycosylation site (N-linked (GlcNAc...) asparagine). The helical transmembrane segment at 26 to 46 threads the bilayer; sequence LLFVIFLLLYLFTLGTNAIII. Over 47–54 the chain is Cytoplasmic; sequence STIVLDRA. The chain crosses the membrane as a helical span at residues 55–75; it reads LHIPMYFFLAILSCSEICYTF. Over 76 to 99 the chain is Extracellular; that stretch reads IIVPKMLVDLLSQKKTISFLGCAI. A helical membrane pass occupies residues 100–120; the sequence is QMFSFLFLGCSHSFLLAVMGY. Residues 121-139 lie on the Cytoplasmic side of the membrane; the sequence is DRYIAICNPLRYSVLMGHG. The helical transmembrane segment at 140–160 threads the bilayer; that stretch reads VCMGLVAAACACGFTVAQIIT. Residues 161–197 lie on the Extracellular side of the membrane; sequence SLVFHLPFYSSNQLHHFFCDIAPVLKLASHHNHFSQI. The chain crosses the membrane as a helical span at residues 198–217; it reads VIFMLCTLVLAIPLLLILVS. The Cytoplasmic portion of the chain corresponds to 218–237; that stretch reads YVHILSAILQFPSTLGRCKA. Residues 238–258 traverse the membrane as a helical segment; that stretch reads FSTCVSHLIIVTVHYGCASFI. Topologically, residues 259-271 are extracellular; that stretch reads YLRPQSNYSSSQD. An N-linked (GlcNAc...) asparagine glycan is attached at Asn265. Residues 272–292 traverse the membrane as a helical segment; the sequence is ALISVSYTIITPLFNPMIYSL. Topologically, residues 293 to 312 are cytoplasmic; the sequence is RNKEFKSALCKIVRRTISLL.

The protein belongs to the G-protein coupled receptor 1 family.

It is found in the cell membrane. Functionally, odorant receptor. The polypeptide is Olfactory receptor 10K2 (OR10K2) (Homo sapiens (Human)).